A 66-amino-acid chain; its full sequence is Large ribosomal subunit protein bL35 (66 aa).

The interval Gly-20 to Gln-40 is disordered.

The protein belongs to the bacterial ribosomal protein bL35 family.

The protein is Large ribosomal subunit protein bL35 of Nitrobacter winogradskyi (strain ATCC 25391 / DSM 10237 / CIP 104748 / NCIMB 11846 / Nb-255).